Here is a 498-residue protein sequence, read N- to C-terminus: Glycerol kinase (498 aa).

Residue threonine 14 participates in ADP binding. ATP is bound by residues threonine 14, threonine 15, and serine 16. Threonine 14 is a sn-glycerol 3-phosphate binding site. Arginine 18 provides a ligand contact to ADP. Residues arginine 84, glutamate 85, tyrosine 136, and aspartate 243 each coordinate sn-glycerol 3-phosphate. Residues arginine 84, glutamate 85, tyrosine 136, aspartate 243, and glutamine 244 each coordinate glycerol. Positions 265 and 308 each coordinate ADP. Positions 265, 308, 312, and 409 each coordinate ATP. 2 residues coordinate ADP: glycine 409 and asparagine 413.

The protein belongs to the FGGY kinase family.

It catalyses the reaction glycerol + ATP = sn-glycerol 3-phosphate + ADP + H(+). It participates in polyol metabolism; glycerol degradation via glycerol kinase pathway; sn-glycerol 3-phosphate from glycerol: step 1/1. With respect to regulation, inhibited by fructose 1,6-bisphosphate (FBP). Key enzyme in the regulation of glycerol uptake and metabolism. Catalyzes the phosphorylation of glycerol to yield sn-glycerol 3-phosphate. This Shewanella frigidimarina (strain NCIMB 400) protein is Glycerol kinase.